Reading from the N-terminus, the 169-residue chain is Ribosomal RNA large subunit methyltransferase H (169 aa).

S-adenosyl-L-methionine contacts are provided by residues Leu-85, Gly-117, and 136 to 141 (LGELTW).

This sequence belongs to the RNA methyltransferase RlmH family. Homodimer.

Its subcellular location is the cytoplasm. It carries out the reaction pseudouridine(1915) in 23S rRNA + S-adenosyl-L-methionine = N(3)-methylpseudouridine(1915) in 23S rRNA + S-adenosyl-L-homocysteine + H(+). Specifically methylates the pseudouridine at position 1915 (m3Psi1915) in 23S rRNA. The sequence is that of Ribosomal RNA large subunit methyltransferase H from Brucella ovis (strain ATCC 25840 / 63/290 / NCTC 10512).